The sequence spans 84 residues: uncharacterized protein (84 aa).

The HTH cro/C1-type domain maps to 7–62; that stretch reads IDVMLAKRKMSVTELSERVGITMANLSILKNGKAKAIRLSTLEAICKALECQPGDI. Positions 18–37 form a DNA-binding region, H-T-H motif; the sequence is VTELSERVGITMANLSILKN.

This is an uncharacterized protein from Bacillus subtilis (strain 168).